Consider the following 1238-residue polypeptide: Protein MMS22-like (1238 aa).

The protein belongs to the MMS22 family. MMS22L subfamily. Component of the MMS22L-TONSL complex, a complex at least composed of MMS22L and TONSL/NFKBIL2. Interacts with RAD51; interaction is direct. Degraded by the ubiquitin-proteasome system upon replication stress.

The protein resides in the nucleus. It localises to the chromosome. Its function is as follows. Component of the MMS22L-TONSL complex, a complex that promotes homologous recombination-mediated repair of double-strand breaks (DSBs) at stalled or collapsed replication forks. The MMS22L-TONSL complex is required to maintain genome integrity during DNA replication. It mediates the assembly of RAD51 filaments on single-stranded DNA (ssDNA): the MMS22L-TONSL complex is recruited to DSBs following histone replacement by histone chaperones and eviction of the replication protein A complex (RPA/RP-A) from DSBs. Following recruitment to DSBs, the TONSL-MMS22L complex promotes recruitment of RAD51 filaments and subsequent homologous recombination. Within the complex, MMS22L acts by binding ssDNA. The chain is Protein MMS22-like (Mms22l) from Mus musculus (Mouse).